Consider the following 348-residue polypeptide: GMP reductase 2 (348 aa).

NADP(+) contacts are provided by residues 26–27 (SR), Lys78, 129–131 (DVA), and 180–181 (IG). K(+) is bound by residues Gly181, Gly183, and Cys186. Cys186 functions as the Thioimidate intermediate in the catalytic mechanism. Catalysis depends on Thr188, which acts as the Proton donor/acceptor. Arg189 is a K(+) binding site. Residues 219 to 221 (DGG), 242 to 243 (GG), 268 to 270 (GMS), and 286 to 290 (RASEG) contribute to the GMP site. NADP(+) contacts are provided by residues Met269 and 285–286 (YR). At Lys291 the chain carries N6-acetyllysine. Residue 314–317 (STCT) participates in NADP(+) binding.

This sequence belongs to the IMPDH/GMPR family. GuaC type 1 subfamily. Homotetramer.

The enzyme catalyses IMP + NH4(+) + NADP(+) = GMP + NADPH + 2 H(+). Functionally, catalyzes the irreversible NADPH-dependent deamination of GMP to IMP. It functions in the conversion of nucleobase, nucleoside and nucleotide derivatives of G to A nucleotides, and in maintaining the intracellular balance of A and G nucleotides. Plays a role in modulating cellular differentiation. The protein is GMP reductase 2 of Bos taurus (Bovine).